The following is a 157-amino-acid chain: Transcriptional regulator MraZ (157 aa).

SpoVT-AbrB domains follow at residues 7 to 54 (TYTM…GTSL) and 83 to 126 (TEML…EPER).

The protein belongs to the MraZ family. As to quaternary structure, forms oligomers.

Its subcellular location is the cytoplasm. The protein resides in the nucleoid. In Azorhizobium caulinodans (strain ATCC 43989 / DSM 5975 / JCM 20966 / LMG 6465 / NBRC 14845 / NCIMB 13405 / ORS 571), this protein is Transcriptional regulator MraZ.